We begin with the raw amino-acid sequence, 370 residues long: GTPase Obg (370 aa).

Residues 1–159 (MKFVDEAYID…KKLKLELRVL (159 aa)) enclose the Obg domain. The OBG-type G domain occupies 160–333 (ADVGLLGMPN…LVQAIYQHVA (174 aa)). GTP is bound by residues 166 to 173 (GMPNAGKS), 191 to 195 (FTTLH), 213 to 216 (DVPG), 283 to 286 (NKLD), and 314 to 316 (SAL). Residues serine 173 and threonine 193 each coordinate Mg(2+). Residues 346–370 (FAEPEADESDDEPRFAPQADDPRFR) are disordered.

Belongs to the TRAFAC class OBG-HflX-like GTPase superfamily. OBG GTPase family. In terms of assembly, monomer. It depends on Mg(2+) as a cofactor.

It is found in the cytoplasm. Its function is as follows. An essential GTPase which binds GTP, GDP and possibly (p)ppGpp with moderate affinity, with high nucleotide exchange rates and a fairly low GTP hydrolysis rate. Plays a role in control of the cell cycle, stress response, ribosome biogenesis and in those bacteria that undergo differentiation, in morphogenesis control. The protein is GTPase Obg of Methylibium petroleiphilum (strain ATCC BAA-1232 / LMG 22953 / PM1).